The sequence spans 146 residues: UPF0742 protein PB2B2.17c (146 aa).

A helical transmembrane segment spans residues L38–S60.

Belongs to the UPF0742 family.

The protein resides in the cytoplasm. The protein localises to the nucleus membrane. This chain is UPF0742 protein PB2B2.17c, found in Schizosaccharomyces pombe (strain 972 / ATCC 24843) (Fission yeast).